The following is a 449-amino-acid chain: MNHTDTSPIKLRKNWNAREMQALFDERAGRTDPRIYTDEDLYQIELERVFGRSWLLLGHETQIKKPGDYTTNYMGEDPVLVVRQKDGSIAVFLNQCRHRGMRICRSDAGNAKAFTCSYHGWAYDTAGNLVNVPFEAESFPCLDKKEWSPLKARVATYKGLIFANWDHDAPDLDTYLGEAKFYMDHMLDRTEAGTEAIPGVQKWVIPCNWKLAAEQFCWDAYHAATTAHLSGILAGLPDGVELADLAPPTVGKQYRAPWGGHGSGFFIGEPDLLLAIMGPKITSYWTEGPASEKAAQRLGSVERGSKLTVEHMTVFPTCSFLLGANTVRTWHPRGPNEVEVWAFTVVDADAPDDIKEEFRRQTVRTFSAGGVFEQDDGENWVEIQHVLRGHKARSRPFNAEMSMGQTIDDDPVYPGRISNVYSDEAARGFYAQWLRMMTSSDWAALNATR.

The 110-residue stretch at 54–163 folds into the Rieske domain; it reads WLLLGHETQI…VATYKGLIFA (110 aa). Cys-96, His-98, Cys-116, and His-119 together coordinate [2Fe-2S] cluster. 3 residues coordinate Fe cation: His-222, His-228, and Asp-376.

This sequence belongs to the bacterial ring-hydroxylating dioxygenase alpha subunit family. In terms of assembly, this dioxygenase system consists of four proteins: the two subunits of the oxygenase component (TecA1 and TecA2), a ferredoxin (TecA3) and a ferredoxin reductase (TecA4). The cofactor is [2Fe-2S] cluster. Fe cation serves as cofactor.

The catalysed reaction is chlorobenzene + NADH + O2 + H(+) = (1R,2R)-3-chlorocyclohexa-3,5-diene-1,2-diol + NAD(+). Its pathway is aromatic compound metabolism. In terms of biological role, part of the oxygenase component of the chlorobenzene dioxygenase system that catalyzes the dihydroxylation of a range of aromatic compounds, including chlorinated benzenes and toluenes, and dinuclear aromatics such as biphenyl and dibenzo-p-dioxin. The alpha subunit is responsible for substrate specificity. The sequence is that of Chlorobenzene dioxygenase subunit alpha from Cupriavidus sp. (strain PS12).